The primary structure comprises 78 residues: MSTIQRICLVLTIIGAINWGLIGFFQFDLVAAIFGGQGSALSRIIYGLVGIAGLINLGLLFKPNEERSREEAANPEMR.

2 consecutive transmembrane segments (helical) span residues isoleucine 7–phenylalanine 27 and leucine 41–phenylalanine 61.

It is found in the cell membrane. This is an uncharacterized protein from Bacillus subtilis (strain 168).